The sequence spans 208 residues: Holliday junction branch migration complex subunit RuvA (208 aa).

Positions 1–63 (MIGMLTGRVE…QDSVTLYGFL (63 aa)) are domain I. The segment at 64–142 (DRDSKRVFLQ…LNQSDDASAG (79 aa)) is domain II. The segment at 143 to 151 (NAPYQPTVD) is flexible linker. The segment at 151–208 (DAGVEQVVEGLVSLGWRQQDAQRAVNEACAENDVPMPLASDDAPRVLRLALARMDRGR) is domain III.

This sequence belongs to the RuvA family. Homotetramer. Forms an RuvA(8)-RuvB(12)-Holliday junction (HJ) complex. HJ DNA is sandwiched between 2 RuvA tetramers; dsDNA enters through RuvA and exits via RuvB. An RuvB hexamer assembles on each DNA strand where it exits the tetramer. Each RuvB hexamer is contacted by two RuvA subunits (via domain III) on 2 adjacent RuvB subunits; this complex drives branch migration. In the full resolvosome a probable DNA-RuvA(4)-RuvB(12)-RuvC(2) complex forms which resolves the HJ.

Its subcellular location is the cytoplasm. Functionally, the RuvA-RuvB-RuvC complex processes Holliday junction (HJ) DNA during genetic recombination and DNA repair, while the RuvA-RuvB complex plays an important role in the rescue of blocked DNA replication forks via replication fork reversal (RFR). RuvA specifically binds to HJ cruciform DNA, conferring on it an open structure. The RuvB hexamer acts as an ATP-dependent pump, pulling dsDNA into and through the RuvAB complex. HJ branch migration allows RuvC to scan DNA until it finds its consensus sequence, where it cleaves and resolves the cruciform DNA. In Bifidobacterium longum subsp. infantis (strain ATCC 15697 / DSM 20088 / JCM 1222 / NCTC 11817 / S12), this protein is Holliday junction branch migration complex subunit RuvA.